A 128-amino-acid chain; its full sequence is Keratin-associated protein 2-1 (128 aa).

The 10 X 5 AA repeats of C-C-[CDPQRWG]-[APRS]-[CIPSTVD] stretch occupies residues 5–112 (CCGSTFSSLS…SVQSPCCRPP (108 aa)).

This sequence belongs to the KRTAP type 2 family. As to quaternary structure, interacts with hair keratins.

Functionally, in the hair cortex, hair keratin intermediate filaments are embedded in an interfilamentous matrix, consisting of hair keratin-associated proteins (KRTAP), which are essential for the formation of a rigid and resistant hair shaft through their extensive disulfide bond cross-linking with abundant cysteine residues of hair keratins. The matrix proteins include the high-sulfur and high-glycine-tyrosine keratins. The polypeptide is Keratin-associated protein 2-1 (KRTAP2-1) (Homo sapiens (Human)).